Here is a 350-residue protein sequence, read N- to C-terminus: Peptide-N(4)-(N-acetyl-beta-glucosaminyl)asparagine amidase (350 aa).

Positions 123, 126, 157, and 160 each coordinate Zn(2+). C183 functions as the Nucleophile in the catalytic mechanism. Catalysis depends on residues H210 and D227. E230 serves as a coordination point for substrate. The interval 324 to 350 is disordered; sequence EIPPAAGAAGRQSGSADWKRQRGEDGR. Residues 340 to 350 show a composition bias toward basic and acidic residues; that stretch reads DWKRQRGEDGR.

It belongs to the transglutaminase-like superfamily. PNGase family. Zn(2+) serves as cofactor.

It is found in the cytoplasm. The catalysed reaction is Hydrolysis of an N(4)-(acetyl-beta-D-glucosaminyl)asparagine residue in which the glucosamine residue may be further glycosylated, to yield a (substituted) N-acetyl-beta-D-glucosaminylamine and a peptide containing an aspartate residue.. Functionally, specifically deglycosylates the denatured form of N-linked glycoproteins in the cytoplasm and assists their proteasome-mediated degradation. Cleaves the beta-aspartyl-glucosamine (GlcNAc) of the glycan and the amide side chain of Asn, converting Asn to Asp. Prefers proteins containing high-mannose over those bearing complex type oligosaccharides. Can recognize misfolded proteins in the endoplasmic reticulum that are exported to the cytosol to be destroyed and deglycosylate them, while it has no activity toward native proteins. Deglycosylation is a prerequisite for subsequent proteasome-mediated degradation of some, but not all, misfolded glycoproteins. The polypeptide is Peptide-N(4)-(N-acetyl-beta-glucosaminyl)asparagine amidase (PNG1) (Eremothecium gossypii (strain ATCC 10895 / CBS 109.51 / FGSC 9923 / NRRL Y-1056) (Yeast)).